Reading from the N-terminus, the 320-residue chain is Glucokinase (320 aa).

The protein belongs to the ROK (NagC/XylR) family. As to quaternary structure, monomer. A divalent metal cation serves as cofactor.

It catalyses the reaction D-glucose + ATP = D-glucose 6-phosphate + ADP + H(+). Catalyzes the phosphorylation of D-glucose to D-glucose 6-phosphate using ATP as the phosphate donor. ITP can also serve as an effective phosphoryl donor. According to Hansen et al., the enzyme has a broad hexose specificity, and in addition to glucose, which shows the highest catalytic efficiency, it can also phosphorylate fructose, mannose, glucosamine, N-acetylglucosamine, N-acetylmannosamine and 2-deoxyglucose. However, according to Sakuraba et al., the enzyme shows strict specificity for D-glucose. The sequence is that of Glucokinase from Aeropyrum pernix (strain ATCC 700893 / DSM 11879 / JCM 9820 / NBRC 100138 / K1).